Reading from the N-terminus, the 51-residue chain is Ribosome biogenesis protein Nop10 (51 aa).

Belongs to the NOP10 family.

Its function is as follows. Involved in ribosome biogenesis; more specifically in 18S rRNA pseudouridylation and in cleavage of pre-rRNA. In Methanococcus maripaludis (strain C6 / ATCC BAA-1332), this protein is Ribosome biogenesis protein Nop10.